A 754-amino-acid polypeptide reads, in one-letter code: Deadenylation-dependent mRNA-decapping factor pdc2 (754 aa).

The interval leucine 499 to alanine 754 is interaction with lsm1.

Belongs to the PAT1 family. Interacts with dcp2. Interacts with lsm1; via C-terminus.

The protein localises to the cytoplasm. The protein resides in the nucleus. It localises to the P-body. Its function is as follows. Activator of decapping that functions as a general and active mechanism of translational repression and required for P-body formation. Stabilizes the 3' terminus of mRNAs and modulates the rates of mRNA-decapping that occur following deadenylation. Might be required for promoting the formation or the stabilization of the preinitiation translation complexes. Necessary for accurate chromosome transmission during cell division. Together with lsm1, recruits the deadenylase ccr4 to P-bodies. This Schizosaccharomyces pombe (strain 972 / ATCC 24843) (Fission yeast) protein is Deadenylation-dependent mRNA-decapping factor pdc2.